We begin with the raw amino-acid sequence, 91 residues long: Small ribosomal subunit protein bS20 (91 aa).

The span at 1 to 18 shows a compositional bias: basic and acidic residues; that stretch reads MPLHKSAEKRLRQSEKRN. A disordered region spans residues 1–24; the sequence is MPLHKSAEKRLRQSEKRNVRNRAR.

Belongs to the bacterial ribosomal protein bS20 family.

Binds directly to 16S ribosomal RNA. The sequence is that of Small ribosomal subunit protein bS20 from Chlorobium phaeobacteroides (strain DSM 266 / SMG 266 / 2430).